The chain runs to 141 residues: Large ribosomal subunit protein uL11 (141 aa).

This sequence belongs to the universal ribosomal protein uL11 family. In terms of assembly, part of the ribosomal stalk of the 50S ribosomal subunit. Interacts with L10 and the large rRNA to form the base of the stalk. L10 forms an elongated spine to which L12 dimers bind in a sequential fashion forming a multimeric L10(L12)X complex. Post-translationally, one or more lysine residues are methylated.

In terms of biological role, forms part of the ribosomal stalk which helps the ribosome interact with GTP-bound translation factors. The protein is Large ribosomal subunit protein uL11 of Prochlorococcus marinus (strain MIT 9312).